We begin with the raw amino-acid sequence, 161 residues long: Tropomyosin-2 (161 aa).

Residues 1–161 are a coiled coil; sequence MEKIKEKLNS…DEIANSLENL (161 aa). Residues 32-43 are compositionally biased toward basic and acidic residues; the sequence is LEQSNTEKENEI. A disordered region spans residues 32–97; it reads LEQSNTEKEN…NQDLEQQLED (66 aa). Serine 55 is subject to Phosphoserine. Positions 62–83 are enriched in polar residues; that stretch reads SQLSDTKQLAEDSNNLRSNNEN. A phosphoserine mark is found at serine 116 and serine 157.

As to quaternary structure, homodimer.

It is found in the cytoplasm. The protein resides in the cytoskeleton. Functionally, involved in cell morphogenesis. Binds to F-actin and stabilizes the actin filaments. The sequence is that of Tropomyosin-2 (TPM2) from Saccharomyces cerevisiae (strain ATCC 204508 / S288c) (Baker's yeast).